Consider the following 271-residue polypeptide: uncharacterized protein (271 aa).

The 129-residue stretch at isoleucine 77–valine 205 folds into the DOD-type homing endonuclease domain.

This is an uncharacterized protein from Methanocaldococcus jannaschii (strain ATCC 43067 / DSM 2661 / JAL-1 / JCM 10045 / NBRC 100440) (Methanococcus jannaschii).